Here is a 901-residue protein sequence, read N- to C-terminus: Protein translocase subunit SecA (901 aa).

Residues Gln-87, 105 to 109 (GEGKT), and Asp-512 each bind ATP. Residues Cys-885, Cys-887, Cys-896, and His-897 each coordinate Zn(2+).

Belongs to the SecA family. In terms of assembly, monomer and homodimer. Part of the essential Sec protein translocation apparatus which comprises SecA, SecYEG and auxiliary proteins SecDF-YajC and YidC. The cofactor is Zn(2+).

It localises to the cell inner membrane. Its subcellular location is the cytoplasm. It carries out the reaction ATP + H2O + cellular proteinSide 1 = ADP + phosphate + cellular proteinSide 2.. Functionally, part of the Sec protein translocase complex. Interacts with the SecYEG preprotein conducting channel. Has a central role in coupling the hydrolysis of ATP to the transfer of proteins into and across the cell membrane, serving both as a receptor for the preprotein-SecB complex and as an ATP-driven molecular motor driving the stepwise translocation of polypeptide chains across the membrane. This Salmonella arizonae (strain ATCC BAA-731 / CDC346-86 / RSK2980) protein is Protein translocase subunit SecA.